The following is a 414-amino-acid chain: Peptidoglycan beta-N-acetylmuramidase NamZ (414 aa).

The first 23 residues, 1-23 (MRKTIFAFLTGLMMFGTITAASA), serve as a signal peptide directing secretion.

The protein belongs to the glycoside hydrolase 171 family. In terms of assembly, homodimer in solution.

Its subcellular location is the secreted. It carries out the reaction Hydrolysis of terminal, non-reducing N-acetylmuramic residues.. Catalyzes the exo-lytic cleavage of beta-1,4-N-acetylmuramate (beta-1,4-MurNAc) from the non-reducing ends of peptidoglycan chains. Specifically hydrolyzes the natural, peptidoglycan-derived disaccharide MurNAc-GlcNAc and the artificial substrate para-nitrophenyl beta-N-acetylmuramic acid (pNP-MurNAc). Requires a MurNAc entity at the non-reducing end, and cannot cleave GlcNAc-MurNAc. Probably plays a role in cell wall turnover and recycling. This is Peptidoglycan beta-N-acetylmuramidase NamZ from Bacillus subtilis (strain 168).